A 157-amino-acid polypeptide reads, in one-letter code: SsrA-binding protein (157 aa).

It belongs to the SmpB family.

It is found in the cytoplasm. Functionally, required for rescue of stalled ribosomes mediated by trans-translation. Binds to transfer-messenger RNA (tmRNA), required for stable association of tmRNA with ribosomes. tmRNA and SmpB together mimic tRNA shape, replacing the anticodon stem-loop with SmpB. tmRNA is encoded by the ssrA gene; the 2 termini fold to resemble tRNA(Ala) and it encodes a 'tag peptide', a short internal open reading frame. During trans-translation Ala-aminoacylated tmRNA acts like a tRNA, entering the A-site of stalled ribosomes, displacing the stalled mRNA. The ribosome then switches to translate the ORF on the tmRNA; the nascent peptide is terminated with the 'tag peptide' encoded by the tmRNA and targeted for degradation. The ribosome is freed to recommence translation, which seems to be the essential function of trans-translation. The chain is SsrA-binding protein from Bacillus licheniformis (strain ATCC 14580 / DSM 13 / JCM 2505 / CCUG 7422 / NBRC 12200 / NCIMB 9375 / NCTC 10341 / NRRL NRS-1264 / Gibson 46).